Reading from the N-terminus, the 226-residue chain is Putative mitochondrial outer membrane protein porin 5 (226 aa).

It belongs to the eukaryotic mitochondrial porin (TC 1.B.8.1) family.

Its subcellular location is the mitochondrion outer membrane. Putative channel that allows diffusion of small hydrophilic molecules through membranes. The chain is Putative mitochondrial outer membrane protein porin 5 (VDAC5) from Arabidopsis thaliana (Mouse-ear cress).